We begin with the raw amino-acid sequence, 344 residues long: Tetraacyldisaccharide 4'-kinase (344 aa).

65 to 72 (HAGGTGKT) contributes to the ATP binding site.

It belongs to the LpxK family.

The catalysed reaction is a lipid A disaccharide + ATP = a lipid IVA + ADP + H(+). The protein operates within glycolipid biosynthesis; lipid IV(A) biosynthesis; lipid IV(A) from (3R)-3-hydroxytetradecanoyl-[acyl-carrier-protein] and UDP-N-acetyl-alpha-D-glucosamine: step 6/6. Its function is as follows. Transfers the gamma-phosphate of ATP to the 4'-position of a tetraacyldisaccharide 1-phosphate intermediate (termed DS-1-P) to form tetraacyldisaccharide 1,4'-bis-phosphate (lipid IVA). The polypeptide is Tetraacyldisaccharide 4'-kinase (Neisseria meningitidis serogroup C / serotype 2a (strain ATCC 700532 / DSM 15464 / FAM18)).